Reading from the N-terminus, the 87-residue chain is Small ribosomal subunit protein bS20 (87 aa).

It belongs to the bacterial ribosomal protein bS20 family.

Its function is as follows. Binds directly to 16S ribosomal RNA. This is Small ribosomal subunit protein bS20 from Corynebacterium diphtheriae (strain ATCC 700971 / NCTC 13129 / Biotype gravis).